The chain runs to 505 residues: L-amino-acid oxidase (505 aa).

Residues 1 to 18 form the signal peptide; it reads MNVFLMFSLLFLAALGSC. A disulfide bond links Cys28 and Cys191. Residues 61 to 62, 81 to 82, Arg89, and 105 to 108 each bind FAD; these read MS, EA, and GPMR. Arg108 serves as a coordination point for substrate. Asn190 is a glycosylation site (N-linked (GlcNAc...) asparagine). His241 lines the substrate pocket. Val279 is an FAD binding site. Cysteines 349 and 430 form a disulfide. Residue Asn379 is glycosylated (N-linked (GlcNAc...) asparagine). Tyr390 is a substrate binding site. FAD-binding positions include Glu475 and 482–487; that span reads GWIDST. 482 to 483 is a binding site for substrate; sequence GW.

The protein belongs to the flavin monoamine oxidase family. FIG1 subfamily. As to quaternary structure, monomer. This is in contrast with most of its orthologs, that are non-covalently linked homodimers. Requires FAD as cofactor. Post-translationally, N-glycosylated. As to expression, expressed by the venom gland.

The protein localises to the secreted. The catalysed reaction is an L-alpha-amino acid + O2 + H2O = a 2-oxocarboxylate + H2O2 + NH4(+). It carries out the reaction L-leucine + O2 + H2O = 4-methyl-2-oxopentanoate + H2O2 + NH4(+). Functionally, catalyzes an oxidative deamination of predominantly hydrophobic and aromatic L-amino acids, thus producing hydrogen peroxide that may contribute to the diverse toxic effects of this enzyme. Shows activity on L-Leu. Exhibits diverse biological activities, such as hemorrhage, edema, antibacterial and antiparasitic activities, as well as regulation of platelet aggregation. Effects of snake L-amino oxidases on platelets are controversial, since they either induce aggregation or inhibit agonist-induced aggregation. These different effects are probably due to different experimental conditions. This protein has an ability to induce hemolysis and apoptosis. In Protobothrops flavoviridis (Habu), this protein is L-amino-acid oxidase.